Here is a 411-residue protein sequence, read N- to C-terminus: MVKRNVHLTKLQSGYLFPEINRRKNEFLKKHPSAQLINLGIGDTTQPIPLYISEAMQNFAKQLASEKTYRGYGTEQGSILLREAIAEQYYQGKIDPQEVFVSDGSKCDVGRLQILFGSDATIAVQNPTYPAYVDTGVINGQASFFQTSTKQYQRITYMSCLPENNFFPDLANLPKTDLIYFCSPNNPTGSAATNEQLRELVQFAKKRQSIIIFDAAYASFVRSSHIPRSIYEIEGAKEVAIEVGSFSKMIGFTGVRLGWSVVPKQLRFEDGHSVQQDWERIVCTFFNGASNIAQAGGLAALQKEGLQAIDELSSYYMKNSNILKKAFEECGYKVYGGENVPYLWVHFPQLTSWEAFEILLKQSQLVSVPGSGFGSAGEGFLRFSAFGKQSDITVALPRIKHALLKIKPTVY.

Substrate-binding residues include tyrosine 15 and glycine 42. Pyridoxal 5'-phosphate-binding positions include tyrosine 72, 105–106, tyrosine 129, asparagine 186, tyrosine 217, and 245–247; these read SK and SFS. Substrate-binding residues include lysine 106, tyrosine 129, and asparagine 186. Lysine 248 carries the post-translational modification N6-(pyridoxal phosphate)lysine. Pyridoxal 5'-phosphate-binding residues include arginine 256 and asparagine 287. Substrate-binding residues include asparagine 287 and arginine 382.

Belongs to the class-I pyridoxal-phosphate-dependent aminotransferase family. LL-diaminopimelate aminotransferase subfamily. In terms of assembly, homodimer. The cofactor is pyridoxal 5'-phosphate.

The enzyme catalyses (2S,6S)-2,6-diaminopimelate + 2-oxoglutarate = (S)-2,3,4,5-tetrahydrodipicolinate + L-glutamate + H2O + H(+). The protein operates within amino-acid biosynthesis; L-lysine biosynthesis via DAP pathway; LL-2,6-diaminopimelate from (S)-tetrahydrodipicolinate (aminotransferase route): step 1/1. Involved in the synthesis of meso-diaminopimelate (m-DAP or DL-DAP), required for both lysine and peptidoglycan biosynthesis. Catalyzes the direct conversion of tetrahydrodipicolinate to LL-diaminopimelate. Is also able to use meso-diaminopimelate, lysine or ornithine as substrates. The sequence is that of LL-diaminopimelate aminotransferase from Protochlamydia amoebophila (strain UWE25).